The primary structure comprises 242 residues: ATP synthase subunit a (242 aa).

The next 6 membrane-spanning stretches (helical) occupy residues 29-49, 84-104, 114-134, 140-160, 181-201, and 203-223; these read SSIY…LAFY, FIPL…LGMT, IIVT…VGFV, FLTL…MIVI, MAGH…MIYL, and FLPI…AILQ.

Belongs to the ATPase A chain family. As to quaternary structure, F-type ATPases have 2 components, CF(1) - the catalytic core - and CF(0) - the membrane proton channel. CF(1) has five subunits: alpha(3), beta(3), gamma(1), delta(1), epsilon(1). CF(0) has three main subunits: a(1), b(2) and c(9-12). The alpha and beta chains form an alternating ring which encloses part of the gamma chain. CF(1) is attached to CF(0) by a central stalk formed by the gamma and epsilon chains, while a peripheral stalk is formed by the delta and b chains.

Its subcellular location is the cell inner membrane. In terms of biological role, key component of the proton channel; it plays a direct role in the translocation of protons across the membrane. This is ATP synthase subunit a from Rickettsia rickettsii (strain Sheila Smith).